The chain runs to 90 residues: MSRTVFCARLKKEGEGLDFQLYPGELGKRIFDNISKEAWAQWQHKQTMLINEKKLNMMDPEHRKQLETEMVNFLFEGKDVHIEGYTPPSE.

It belongs to the Fe(2+)-trafficking protein family.

Could be a mediator in iron transactions between iron acquisition and iron-requiring processes, such as synthesis and/or repair of Fe-S clusters in biosynthetic enzymes. The polypeptide is Probable Fe(2+)-trafficking protein (Vibrio campbellii (strain ATCC BAA-1116)).